The chain runs to 343 residues: General transcription and DNA repair factor IIH subunit TFB6 (343 aa).

At tyrosine 69 the chain carries Phosphotyrosine. Phosphothreonine occurs at positions 71 and 84. Serine 104, serine 105, serine 108, and serine 342 each carry phosphoserine.

Component of the general transcription factor TFIIH, composed of a 7-subunit TFIIH core complex composed of XPB/SSL2, XPD/RAD3, SSL1, TFB1, TFB2, TFB4 and TFB5 which is active in NER; the 3-subunit CTD-kinase module TFIIK composed of CCL1, KIN28, and TFB3 which is active in transcription; as well as TFB6 that regulates SSL2 association with the complex. Post-translationally, phosphorylation leads the dissociation of from SSL2.

The protein localises to the cytoplasm. It is found in the nucleus. Component of the general transcription and DNA repair factor IIH (TFIIH) core complex, which is involved in general and transcription-coupled nucleotide excision repair (NER) of damaged DNA and, when complexed to TFIIK, in RNA transcription by RNA polymerase II. In NER, TFIIH acts by opening DNA around the lesion to allow the excision of the damaged oligonucleotide and its replacement by a new DNA fragment. In transcription, TFIIH has an essential role in transcription initiation. When the pre-initiation complex (PIC) has been established, TFIIH is required for promoter opening and promoter escape. Phosphorylation of the C-terminal tail (CTD) of the largest subunit of RNA polymerase II by the kinase module TFIIK controls the initiation of transcription. TFB6 facilitates dissociation of the SSL2 helicase from TFIIH after transcription initiation. The protein is General transcription and DNA repair factor IIH subunit TFB6 of Saccharomyces cerevisiae (strain ATCC 204508 / S288c) (Baker's yeast).